Here is a 503-residue protein sequence, read N- to C-terminus: Anthranilate synthase component 1 3 (503 aa).

Residue 269–271 (PYS) participates in L-tryptophan binding. 304 to 305 (GT) contributes to the chorismate binding site. Position 331 (Glu331) interacts with Mg(2+). Chorismate contacts are provided by residues Tyr419, Arg439, 453 to 455 (GSG), and Gly455. Glu468 provides a ligand contact to Mg(2+).

Belongs to the anthranilate synthase component I family. In terms of assembly, tetramer of two components I and two components II. Mg(2+) serves as cofactor.

It catalyses the reaction chorismate + L-glutamine = anthranilate + pyruvate + L-glutamate + H(+). It functions in the pathway amino-acid biosynthesis; L-tryptophan biosynthesis; L-tryptophan from chorismate: step 1/5. The protein is Anthranilate synthase component 1 3 (trpE3) of Haloarcula marismortui (strain ATCC 43049 / DSM 3752 / JCM 8966 / VKM B-1809) (Halobacterium marismortui).